A 299-amino-acid polypeptide reads, in one-letter code: Ornithine carbamoyltransferase (299 aa).

Residues 52–55 (STRT), glutamine 79, arginine 103, and 130–133 (HPCQ) contribute to the carbamoyl phosphate site. L-ornithine is bound by residues asparagine 161, aspartate 218, and 222–223 (SM). Carbamoyl phosphate-binding positions include 258 to 259 (CL) and arginine 286.

It belongs to the aspartate/ornithine carbamoyltransferase superfamily. OTCase family.

The protein resides in the cytoplasm. It catalyses the reaction carbamoyl phosphate + L-ornithine = L-citrulline + phosphate + H(+). Its pathway is amino-acid biosynthesis; L-arginine biosynthesis; L-arginine from L-ornithine and carbamoyl phosphate: step 1/3. In terms of biological role, reversibly catalyzes the transfer of the carbamoyl group from carbamoyl phosphate (CP) to the N(epsilon) atom of ornithine (ORN) to produce L-citrulline. The sequence is that of Ornithine carbamoyltransferase from Ruthia magnifica subsp. Calyptogena magnifica.